Reading from the N-terminus, the 464-residue chain is Soluble pyridine nucleotide transhydrogenase (464 aa).

An FAD-binding site is contributed by 35 to 44 (DSRRQVGGNC).

It belongs to the class-I pyridine nucleotide-disulfide oxidoreductase family. Requires FAD as cofactor.

It is found in the cytoplasm. It catalyses the reaction NAD(+) + NADPH = NADH + NADP(+). In terms of biological role, conversion of NADPH, generated by peripheral catabolic pathways, to NADH, which can enter the respiratory chain for energy generation. This is Soluble pyridine nucleotide transhydrogenase from Pseudomonas putida (strain W619).